The chain runs to 147 residues: Large ribosomal subunit protein bL9 (147 aa).

This sequence belongs to the bacterial ribosomal protein bL9 family.

Functionally, binds to the 23S rRNA. The polypeptide is Large ribosomal subunit protein bL9 (Campylobacter jejuni subsp. jejuni serotype O:2 (strain ATCC 700819 / NCTC 11168)).